A 1433-amino-acid chain; its full sequence is MLARKDTRVKSDFSEIIISLASPESILERSRGEVTQPETINYRTYKPEMKGLFCERIFGPVKDWECHCGKYKRIRYKGIICDRCGVEVTEKKVRRERTGHIELVIPVAHTWYFRSLPSKIGNLLGFPTKKLDQIIYYERYVVVQPGIKAEEGLSYMDFLTEEEYLDILDSLPRENQLLDDSDPKKFIAKMGAEALEFMLSRIDLDTLSSELREQAHTDTSQQRRIEALKRLKIVEAFRDAKTRIANRPEWMVMRIIPVIPPELRPLVPLDGGKFATSDLNDLYRRVIIRNNRLKRLIDIKAPEVILRNEKRMLQEAVDSLFDNSRKVNTVVAEGSRVLKSFSDILKGKQGRFRQNLLGKRVDYSGRSVIVVGPELKLHECGLPKDMAAELFKPFIIRRLIERGIVKTVKSAKKLVEKKTPVVWDILENVLKGHPILLNRAPTLHRLSIQAFQPKLIEGKAIQLHPLVCAAFNADFDGDQMAVHVPLSHEAIAEASLIMLASHNILNSANGTPLAVPTKDMILGLYYLTKGRKSTPEHPVKGEGMTFFSAQEVIIGIDTGQVSIHALVKVKIKDKDEQGETIEHIVDTIAGRVVFNQYVPEELGFINELLTSKKLQHITSQVYRLVGTSRATQFLDDVKSLGFRNAYKAGVSFALDDIKVPTIKFELIEQAQREVNAVQENYLMGLITDNERYNQIIDIWTRVNTQVTVFLMQELEEDRQGFNSIFMMMNSGARGSREQVRQLGGMRGLMGKPQKQLQGSVGEIIENPILSNFKEGLDVLEYFISTHGARKGLADTALKTADAGYLTRRLVDVAQDVITTEEDCGTLRGVTITTSINKDEVAESISERTLGRISLNDIYDPVTNNLLVNAGEEITEEIAAYIESVGIESIEVRSVLTCETRRGICTKCYGRNLSTGKLVQIGEAVGVIAAQSIGEPGTQLTLRTFHVGGAASSIGVESNIQATDKGVLQFEDFNTIKTTNPQGEQLDVIISRSCEVRLLNPQDNRILMHKHVPYGAYLRVKQGELIEKGQEICYWDPYNAVILTSIDGEIEFHSIEEGITYKEEYDEQTGYKEKVIIESKDKTKNPSITVKGSSGEAINYNIPVKARLIVEDGTKIKAGHPLVKIPRVVSLSKDITGGLPRVTELFEARDPSNPSIVSEIDGFVTYGPIKRGSREIFVESKDGIRRKYLVPLSKHILVQDNDYIKAGYPISDGNTSPSSILHIKGPIAVQEYIAKELQAVYRLQGVKINDKHIEVIIRQMLSKLEVIESGDTTFLPGQTVSKFTFREGNDQLLDKKVVIDAGSSSVLRVGQIITARALHEENSNLKRDKLSLVQARDAQPAIARLKLQGITQASLDTKSFISAASFQDTTRVLSEAAIRGKRDRLQGLKENVIVGHLIPTGTGLPRYSKMIIGLREDYENLVASREKQAATDNI.

4 residues coordinate Zn(2+): Cys66, Cys68, Cys81, and Cys84. The Mg(2+) site is built by Asp474, Asp476, and Asp478. The Zn(2+) site is built by Cys823, Cys897, Cys904, and Cys907.

This sequence belongs to the RNA polymerase beta' chain family. As to quaternary structure, the RNAP catalytic core consists of 2 alpha, 1 beta, 1 beta' and 1 omega subunit. When a sigma factor is associated with the core the holoenzyme is formed, which can initiate transcription. The cofactor is Mg(2+). Zn(2+) is required as a cofactor.

The catalysed reaction is RNA(n) + a ribonucleoside 5'-triphosphate = RNA(n+1) + diphosphate. DNA-dependent RNA polymerase catalyzes the transcription of DNA into RNA using the four ribonucleoside triphosphates as substrates. This chain is DNA-directed RNA polymerase subunit beta', found in Amoebophilus asiaticus (strain 5a2).